Reading from the N-terminus, the 662-residue chain is Glutathione hydrolase 7 (662 aa).

Topologically, residues Met1–Gly106 are cytoplasmic. Ser17, Ser72, Ser79, and Ser83 each carry phosphoserine. Positions Ser26–Lys90 are disordered. A compositionally biased stretch (low complexity) spans Ser72–Ser83. A helical; Signal-anchor for type II membrane protein transmembrane segment spans residues Leu107–Met127. At Gln128 to Leu662 the chain is on the extracellular side. Residues Asn198, Asn267, Asn283, Asn330, Asn353, Asn394, Asn452, Asn519, and Asn586 are each glycosylated (N-linked (GlcNAc...) asparagine).

The protein belongs to the gamma-glutamyltransferase family. As to quaternary structure, heterodimer composed of the light and heavy chains. The active site is located in the light chain. In terms of processing, cleaved by autocatalysis into a large and a small subunit and the autocatalytic cleavage is essential to the functional activation of the enzyme.

Its subcellular location is the membrane. The enzyme catalyses an N-terminal (5-L-glutamyl)-[peptide] + an alpha-amino acid = 5-L-glutamyl amino acid + an N-terminal L-alpha-aminoacyl-[peptide]. It carries out the reaction glutathione + H2O = L-cysteinylglycine + L-glutamate. The catalysed reaction is an S-substituted glutathione + H2O = an S-substituted L-cysteinylglycine + L-glutamate. It participates in sulfur metabolism; glutathione metabolism. Hydrolyzes and transfers gamma-glutamyl moieties from glutathione and other gamma-glutamyl compounds to acceptors. This is Glutathione hydrolase 7 from Bos taurus (Bovine).